The following is a 347-amino-acid chain: UDP-3-O-acylglucosamine N-acyltransferase 1 (347 aa).

The Proton acceptor role is filled by His246.

This sequence belongs to the transferase hexapeptide repeat family. LpxD subfamily. Homotrimer.

It carries out the reaction a UDP-3-O-[(3R)-3-hydroxyacyl]-alpha-D-glucosamine + a (3R)-hydroxyacyl-[ACP] = a UDP-2-N,3-O-bis[(3R)-3-hydroxyacyl]-alpha-D-glucosamine + holo-[ACP] + H(+). It participates in bacterial outer membrane biogenesis; LPS lipid A biosynthesis. In terms of biological role, catalyzes the N-acylation of UDP-3-O-acylglucosamine using 3-hydroxyacyl-ACP as the acyl donor. Is involved in the biosynthesis of lipid A, a phosphorylated glycolipid that anchors the lipopolysaccharide to the outer membrane of the cell. The sequence is that of UDP-3-O-acylglucosamine N-acyltransferase 1 from Francisella tularensis subsp. tularensis (strain SCHU S4 / Schu 4).